The following is a 150-amino-acid chain: MLQLFLRNCAFRIIAVGKVRKGWIQDGLAMYQKRLPGLMITEVRDASLPREAEAILAALNSNEVLVPLSEEGEALTSVSFAKRLEKYGSQRLAFVIGGADGLSAELKNSTQWQLSLSAMTLPHELARLLLVEQLYRAQTILQGGKYHRGS.

S-adenosyl-L-methionine-binding positions include L68, G97, and 116–121 (LSAMTL).

This sequence belongs to the RNA methyltransferase RlmH family. As to quaternary structure, homodimer.

The protein localises to the cytoplasm. The catalysed reaction is pseudouridine(1915) in 23S rRNA + S-adenosyl-L-methionine = N(3)-methylpseudouridine(1915) in 23S rRNA + S-adenosyl-L-homocysteine + H(+). Specifically methylates the pseudouridine at position 1915 (m3Psi1915) in 23S rRNA. The polypeptide is Ribosomal RNA large subunit methyltransferase H (Prochlorococcus marinus (strain MIT 9303)).